The primary structure comprises 497 residues: Argininosuccinate lyase (497 aa).

The protein belongs to the lyase 1 family. Argininosuccinate lyase subfamily.

Its subcellular location is the cytoplasm. The catalysed reaction is 2-(N(omega)-L-arginino)succinate = fumarate + L-arginine. It functions in the pathway amino-acid biosynthesis; L-arginine biosynthesis; L-arginine from L-ornithine and carbamoyl phosphate: step 3/3. The protein is Argininosuccinate lyase of Clavibacter michiganensis subsp. michiganensis (strain NCPPB 382).